We begin with the raw amino-acid sequence, 290 residues long: Barley B recombinant-like protein C (290 aa).

2 disordered regions span residues 60–90 (PHHH…YGMM) and 102–183 (QPEP…RKNI). The span at 104-116 (EPQPQLQHPPSPP) shows a compositional bias: pro residues. The segment covering 138-158 (PPKKRQQGRQPKVLRPKKPKK) has biased composition (basic residues).

Belongs to the BBR/BPC family.

Its subcellular location is the nucleus. Functionally, transcriptional regulator that specifically binds to GA-rich elements (GAGA-repeats) present in regulatory sequences of genes involved in developmental processes. This Oryza sativa subsp. japonica (Rice) protein is Barley B recombinant-like protein C.